Here is a 217-residue protein sequence, read N- to C-terminus: uncharacterized protein (217 aa).

Helical transmembrane passes span 4-23 (IYGI…GKET), 44-66 (NVVI…LTWV), 76-98 (TVET…SIII), 111-128 (FLYL…IHAI), 132-154 (MAMV…PLAL), 166-188 (AGTA…IVLF), and 198-215 (LLLS…ALQL).

Its subcellular location is the cell membrane. This is an uncharacterized protein from Archaeoglobus fulgidus (strain ATCC 49558 / DSM 4304 / JCM 9628 / NBRC 100126 / VC-16).